Reading from the N-terminus, the 224-residue chain is Heme response regulator HssR (224 aa).

The region spanning 3-116 is the Response regulatory domain; the sequence is QCLVVDDDPR…ELIFRIRAVL (114 aa). A 4-aspartylphosphate modification is found at D52. The segment at residues 124–222 is a DNA-binding region (ompR/PhoB-type); the sequence is NSEMTIGNLT…VRGQGYKVEN (99 aa).

In terms of processing, phosphorylated by HssS.

The protein localises to the cytoplasm. Its function is as follows. Member of the two-component regulatory system HssS/HssR involved in intracellular heme homeostasis and tempering of staphylococcal virulence. Phosphorylated HssR binds to a direct repeat sequence within hrtAB promoter and activates the expression of hrtAB, an efflux pump, in response to extracellular heme, hemin, hemoglobin or blood. The polypeptide is Heme response regulator HssR (hssR) (Staphylococcus aureus (strain MRSA252)).